The following is a 428-amino-acid chain: Glutamate-1-semialdehyde 2,1-aminomutase (428 aa).

N6-(pyridoxal phosphate)lysine is present on lysine 267.

It belongs to the class-III pyridoxal-phosphate-dependent aminotransferase family. HemL subfamily. Homodimer. Pyridoxal 5'-phosphate is required as a cofactor.

The protein localises to the cytoplasm. It carries out the reaction (S)-4-amino-5-oxopentanoate = 5-aminolevulinate. It participates in porphyrin-containing compound metabolism; protoporphyrin-IX biosynthesis; 5-aminolevulinate from L-glutamyl-tRNA(Glu): step 2/2. The protein is Glutamate-1-semialdehyde 2,1-aminomutase of Desulforapulum autotrophicum (strain ATCC 43914 / DSM 3382 / VKM B-1955 / HRM2) (Desulfobacterium autotrophicum).